The primary structure comprises 846 residues: ATR-interacting protein mus304 (846 aa).

Disordered regions lie at residues 20-40 (DVSV…FDGI), 90-109 (QGST…QKKP), and 135-162 (EPQK…KTTT). The segment covering 144 to 162 (TSTSRITTSSISVQQKTTT) has biased composition (low complexity). Coiled coils occupy residues 168–240 (ATQS…LADE) and 327–359 (EYSE…LQAK). Positions 504–510 (EELLFDL) match the EEXXXDL motif motif. The disordered stretch occupies residues 651 to 681 (GAVQGSVSNGSTSASVSNPNQNSNSSTTQRG). A compositionally biased stretch (low complexity) spans 655–676 (GSVSNGSTSASVSNPNQNSNSS).

It belongs to the ATRIP family. In terms of assembly, interacts with ATR/mei-41. In terms of tissue distribution, highly expressed in the oocyte and nurse cells from stage 5 onward and in embryos prior to during nuclear division 14. Then, it decreases to background levels during interphase 14. Weakly or not expressed in stage embryos and imaginal disks.

The protein resides in the cytoplasm. In terms of biological role, DNA damage checkpoint protein required for chromosome break repair and for genomic stability during development. The chain is ATR-interacting protein mus304 (mus304) from Drosophila melanogaster (Fruit fly).